The chain runs to 188 residues: Probable manganese efflux pump MntP (188 aa).

Helical transmembrane passes span 3–23 (ITATVLLAFGMSMDAFAASIG), 66–86 (LEWNHWIAFVLLIFLGGRMII), 106–128 (WLLVTTAIATSLDAMAVGVGLAF), 143–163 (ATLIMSTLGMMVGRFIGPILG), and 168–188 (ILGGLVLIGIGVQILWTHFHG).

This sequence belongs to the MntP (TC 9.B.29) family.

It is found in the cell inner membrane. Its function is as follows. Probably functions as a manganese efflux pump. This Escherichia fergusonii (strain ATCC 35469 / DSM 13698 / CCUG 18766 / IAM 14443 / JCM 21226 / LMG 7866 / NBRC 102419 / NCTC 12128 / CDC 0568-73) protein is Probable manganese efflux pump MntP.